The sequence spans 577 residues: DNA primase (577 aa).

A CHC2-type zinc finger spans residues 40–64 (CPFHHDKTPSFTVSNEKQFYYCFGC). The 83-residue stretch at 255 to 337 (VYLLVVEGYI…KKTLKFILLP (83 aa)) folds into the Toprim domain. Positions 261, 305, and 307 each coordinate Mg(2+).

The protein belongs to the DnaG primase family. In terms of assembly, monomer. Interacts with DnaB. The cofactor is Zn(2+). It depends on Mg(2+) as a cofactor.

It carries out the reaction ssDNA + n NTP = ssDNA/pppN(pN)n-1 hybrid + (n-1) diphosphate.. In terms of biological role, RNA polymerase that catalyzes the synthesis of short RNA molecules used as primers for DNA polymerase during DNA replication. The chain is DNA primase from Buchnera aphidicola subsp. Acyrthosiphon pisum (strain APS) (Acyrthosiphon pisum symbiotic bacterium).